The sequence spans 228 residues: 2,3-bisphosphoglycerate-dependent phosphoglycerate mutase (228 aa).

Residues 8–15 (RHGQSEWN), 21–22 (TG), R60, 87–90 (ERHY), K98, 114–115 (RR), and 183–184 (GN) each bind substrate. Residue H9 is the Tele-phosphohistidine intermediate of the active site. E87 serves as the catalytic Proton donor/acceptor.

It belongs to the phosphoglycerate mutase family. BPG-dependent PGAM subfamily.

The enzyme catalyses (2R)-2-phosphoglycerate = (2R)-3-phosphoglycerate. Its pathway is carbohydrate degradation; glycolysis; pyruvate from D-glyceraldehyde 3-phosphate: step 3/5. Catalyzes the interconversion of 2-phosphoglycerate and 3-phosphoglycerate. The sequence is that of 2,3-bisphosphoglycerate-dependent phosphoglycerate mutase from Staphylococcus epidermidis (strain ATCC 12228 / FDA PCI 1200).